A 233-amino-acid chain; its full sequence is Large ribosomal subunit protein uL1 (233 aa).

It belongs to the universal ribosomal protein uL1 family. Part of the 50S ribosomal subunit.

Functionally, binds directly to 23S rRNA. The L1 stalk is quite mobile in the ribosome, and is involved in E site tRNA release. In terms of biological role, protein L1 is also a translational repressor protein, it controls the translation of the L11 operon by binding to its mRNA. In Shewanella sediminis (strain HAW-EB3), this protein is Large ribosomal subunit protein uL1.